A 170-amino-acid polypeptide reads, in one-letter code: Urease accessory protein UreE (170 aa).

Belongs to the UreE family.

The protein localises to the cytoplasm. In terms of biological role, involved in urease metallocenter assembly. Binds nickel. Probably functions as a nickel donor during metallocenter assembly. This chain is Urease accessory protein UreE, found in Helicobacter pylori (strain G27).